The chain runs to 461 residues: Cysteine--tRNA ligase (461 aa).

Zn(2+) is bound at residue cysteine 28. Residues 30–40 carry the 'HIGH' region motif; sequence ITVYDLCHIGH. Positions 209, 234, and 238 each coordinate Zn(2+). The 'KMSKS' region signature appears at 266 to 270; that stretch reads KMSKS. Lysine 269 lines the ATP pocket.

The protein belongs to the class-I aminoacyl-tRNA synthetase family. In terms of assembly, monomer. Zn(2+) is required as a cofactor.

It is found in the cytoplasm. It catalyses the reaction tRNA(Cys) + L-cysteine + ATP = L-cysteinyl-tRNA(Cys) + AMP + diphosphate. The chain is Cysteine--tRNA ligase from Escherichia coli O157:H7.